A 390-amino-acid polypeptide reads, in one-letter code: GTPase Obg (390 aa).

In terms of domain architecture, Obg spans 1–159 (MKFVDEAVIR…RHLRLELLLL (159 aa)). A disordered region spans residues 22–42 (SFRTEKYVPRGGPDGGDGGDG). The span at 33–42 (GPDGGDGGDG) shows a compositional bias: gly residues. The region spanning 160 to 333 (ADVGMLGLPN…LTYNLMTTIE (174 aa)) is the OBG-type G domain. GTP-binding positions include 166–173 (GLPNAGKS), 191–195 (FTTLI), 213–216 (DIPG), 283–286 (NKVD), and 314–316 (SAL). 2 residues coordinate Mg(2+): Ser-173 and Thr-193.

This sequence belongs to the TRAFAC class OBG-HflX-like GTPase superfamily. OBG GTPase family. As to quaternary structure, monomer. It depends on Mg(2+) as a cofactor.

The protein localises to the cytoplasm. An essential GTPase which binds GTP, GDP and possibly (p)ppGpp with moderate affinity, with high nucleotide exchange rates and a fairly low GTP hydrolysis rate. Plays a role in control of the cell cycle, stress response, ribosome biogenesis and in those bacteria that undergo differentiation, in morphogenesis control. This is GTPase Obg from Photobacterium profundum (strain SS9).